Here is a 459-residue protein sequence, read N- to C-terminus: Cysteine--tRNA ligase (459 aa).

C31 is a Zn(2+) binding site. Positions 33–43 (PTVYDNPHIGN) match the 'HIGH' region motif. Zn(2+)-binding residues include C216, H241, and E245. The 'KMSKS' region signature appears at 274 to 278 (KMSKS). Residue K277 coordinates ATP.

It belongs to the class-I aminoacyl-tRNA synthetase family. Monomer. Zn(2+) serves as cofactor.

Its subcellular location is the cytoplasm. The catalysed reaction is tRNA(Cys) + L-cysteine + ATP = L-cysteinyl-tRNA(Cys) + AMP + diphosphate. The sequence is that of Cysteine--tRNA ligase from Rickettsia massiliae (strain Mtu5).